The chain runs to 276 residues: Adenylate kinase (276 aa).

ATP is bound at residue 51–56 (GAGKGT). The segment at 71–100 (ATGDMLRSQVAKKTPLGQAAKKIMDAGGLV) is NMP. AMP contacts are provided by residues Thr72, Arg77, 98 to 100 (GLV), 127 to 130 (GFPR), and Gln134. Residues 168 to 205 (GRLVHPASGRSYHVKFNPPKKEMTDDITGEPLIQRSDD) form an LID region. ATP contacts are provided by residues Arg169 and 178–179 (SY). Residues Arg202 and Arg213 each coordinate AMP. Position 241 (Gln241) interacts with ATP.

The protein belongs to the adenylate kinase family. AK2 subfamily. In terms of assembly, monomer.

Its subcellular location is the cytoplasm. It is found in the cytosol. It localises to the mitochondrion intermembrane space. It catalyses the reaction AMP + ATP = 2 ADP. Its function is as follows. Catalyzes the reversible transfer of the terminal phosphate group between ATP and AMP. Plays an important role in cellular energy homeostasis and in adenine nucleotide metabolism. Adenylate kinase activity is critical for regulation of the phosphate utilization and the AMP de novo biosynthesis pathways. The polypeptide is Adenylate kinase (Podospora anserina (strain S / ATCC MYA-4624 / DSM 980 / FGSC 10383) (Pleurage anserina)).